We begin with the raw amino-acid sequence, 295 residues long: Ethanolamine ammonia-lyase small subunit (295 aa).

Residues Val-207, Glu-228, and Cys-258 each contribute to the adenosylcob(III)alamin site.

Belongs to the EutC family. The basic unit is a heterodimer which dimerizes to form tetramers. The heterotetramers trimerize; 6 large subunits form a core ring with 6 small subunits projecting outwards. The cofactor is adenosylcob(III)alamin.

The protein localises to the bacterial microcompartment. The catalysed reaction is ethanolamine = acetaldehyde + NH4(+). Its pathway is amine and polyamine degradation; ethanolamine degradation. Functionally, catalyzes the deamination of various vicinal amino-alcohols to oxo compounds. Allows this organism to utilize ethanolamine as the sole source of nitrogen and carbon in the presence of external vitamin B12. The protein is Ethanolamine ammonia-lyase small subunit of Escherichia coli (strain 55989 / EAEC).